A 166-amino-acid chain; its full sequence is Large ribosomal subunit protein uL10 (166 aa).

It belongs to the universal ribosomal protein uL10 family. Part of the ribosomal stalk of the 50S ribosomal subunit. The N-terminus interacts with L11 and the large rRNA to form the base of the stalk. The C-terminus forms an elongated spine to which L12 dimers bind in a sequential fashion forming a multimeric L10(L12)X complex.

Functionally, forms part of the ribosomal stalk, playing a central role in the interaction of the ribosome with GTP-bound translation factors. The polypeptide is Large ribosomal subunit protein uL10 (Pelagibacter ubique (strain HTCC1062)).